A 180-amino-acid polypeptide reads, in one-letter code: Signal peptidase complex subunit 2 (180 aa).

Topologically, residues 1–45 (MTDEPVKVVNKWDGPTVKNALDEVVKKILNDKVGWTESHNLMNLR) are cytoplasmic. The chain crosses the membrane as a helical span at residues 46 to 66 (LLISFIGVAFSAFACGYDYYE). Over 67-72 (PFPKSK) the chain is Lumenal. Residues 73 to 93 (IVLAVCSVSYFICMGILQMYQ) form a helical membrane-spanning segment. Residues 94 to 180 (WYVEKDCIYE…LYNRLIRSEQ (87 aa)) lie on the Cytoplasmic side of the membrane.

This sequence belongs to the SPCS2 family. In terms of assembly, component of the signal peptidase complex (SPC) composed of a catalytic subunit sec-11 and three accessory subunits spcs-1, spcs-2 and spcs-3. The complex induces a local thinning of the ER membrane which is used to measure the length of the signal peptide (SP) h-region of protein substrates. This ensures the selectivity of the complex towards h-regions shorter than 18-20 amino acids.

Its subcellular location is the endoplasmic reticulum membrane. In terms of biological role, component of the signal peptidase complex (SPC) which catalyzes the cleavage of N-terminal signal sequences from nascent proteins as they are translocated into the lumen of the endoplasmic reticulum. Enhances the enzymatic activity of SPC and facilitates the interactions between different components of the translocation site. In Caenorhabditis elegans, this protein is Signal peptidase complex subunit 2.